We begin with the raw amino-acid sequence, 310 residues long: Putative sugar kinase PH1459 (310 aa).

The ATP site is built by Lys194, Thr219, and Gly224.

This sequence belongs to the carbohydrate kinase PfkB family.

This Pyrococcus horikoshii (strain ATCC 700860 / DSM 12428 / JCM 9974 / NBRC 100139 / OT-3) protein is Putative sugar kinase PH1459.